Here is a 490-residue protein sequence, read N- to C-terminus: Alginate production protein AlgE (490 aa).

The first 32 residues, 1 to 32, serve as a signal peptide directing secretion; the sequence is MNSSRSVNPRPSFAPRALSLAIALLLGAPAFA. Polar residues-rich tracts occupy residues 102-115 and 343-355; these read DTLQ…NNSR and QFQQ…NRSN. 2 disordered regions span residues 102 to 121 and 331 to 355; these read DTLQ…GREP and ARGS…NRSN.

The protein belongs to the AlgE family.

Its subcellular location is the cell outer membrane. It participates in glycan biosynthesis; alginate biosynthesis. Has non-porin-like, channel-forming properties and probably functions as an alginate permeability pore. This chain is Alginate production protein AlgE (algE), found in Pseudomonas aeruginosa (strain ATCC 15692 / DSM 22644 / CIP 104116 / JCM 14847 / LMG 12228 / 1C / PRS 101 / PAO1).